We begin with the raw amino-acid sequence, 156 residues long: MPRKGNIPKREVLPDPMYGSKVVTKLINNLMVDGKKGKSQRIVYDAFAIVAEKTGEEALEVFNKAMDNIMPVLEVKARRVGGANYQVPIEVRPERRQTLGLRWLVKYTRARGEKGMVEKLAKEIMDAANNTGASVKKKEDTHKMAEANKAFAHYRW.

Belongs to the universal ribosomal protein uS7 family. Part of the 30S ribosomal subunit. Contacts proteins S9 and S11.

Its function is as follows. One of the primary rRNA binding proteins, it binds directly to 16S rRNA where it nucleates assembly of the head domain of the 30S subunit. Is located at the subunit interface close to the decoding center, probably blocks exit of the E-site tRNA. The chain is Small ribosomal subunit protein uS7 from Clostridioides difficile (strain 630) (Peptoclostridium difficile).